We begin with the raw amino-acid sequence, 437 residues long: Bystin (437 aa).

The tract at residues 1–105 is disordered; that stretch reads MPKFKAARGV…DGSDDEDEEW (105 aa). Arginine 40 bears the Omega-N-methylarginine mark. Serine 55 is subject to Phosphoserine. Basic and acidic residues predominate over residues 71–87; that stretch reads AEHGTGDKPAAPRERTT. Serine 98 carries the phosphoserine modification. The residue at position 156 (threonine 156) is a Phosphothreonine. Serine 167 and serine 414 each carry phosphoserine.

The protein belongs to the bystin family. Binds trophinin, tastin and cytokeratins. Found in the placenta from the sixth week of pregnancy. Was localized in the cytoplasm of the syncytiotrophoblast in the chorionic villi and in endometrial decidual cells at the uteroplacental interface. After week 10, the level decreased and then disappeared from placental villi.

It is found in the cytoplasm. The protein localises to the nucleus. The protein resides in the nucleolus. Its function is as follows. Required for processing of 20S pre-rRNA precursor and biogenesis of 40S ribosomal subunits. May be required for trophinin-dependent regulation of cell adhesion during implantation of human embryos. The chain is Bystin from Homo sapiens (Human).